Consider the following 445-residue polypeptide: Phosphoglucosamine mutase (445 aa).

Ser-102 functions as the Phosphoserine intermediate in the catalytic mechanism. Residues Ser-102, Asp-241, Asp-243, and Asp-245 each coordinate Mg(2+). Ser-102 is modified (phosphoserine).

It belongs to the phosphohexose mutase family. Mg(2+) is required as a cofactor. Activated by phosphorylation.

It carries out the reaction alpha-D-glucosamine 1-phosphate = D-glucosamine 6-phosphate. Its function is as follows. Catalyzes the conversion of glucosamine-6-phosphate to glucosamine-1-phosphate. This Haemophilus influenzae (strain 86-028NP) protein is Phosphoglucosamine mutase.